Reading from the N-terminus, the 222-residue chain is CEACAM1-like protein UL7 (222 aa).

N-linked (GlcNAc...) asparagine; by host glycans are attached at residues N50, N56, N60, N71, N105, N109, N125, N132, N147, N164, N168, and N189. A helical membrane pass occupies residues 193-213; it reads LALVGVIVFIALIVVCIMGWW.

Belongs to the RL11 family. Interacts with host FLT3. In terms of processing, highly glycosylated.

Its subcellular location is the secreted. The protein resides in the host cell membrane. Plays a role in modulating the host immune response and affecting host cytokine production. Structurally and functionally homolog of host CEACAM1, induces endothelial cell angiogenesis. Ligands for host FLT3 receptor, activates the PI3K/AKT and MAPK/ERK pathways. In turn, triggers hematopoietic progenitor cell and monocyte differentiation leading to virus reactivation. In Human cytomegalovirus (strain AD169) (HHV-5), this protein is CEACAM1-like protein UL7 (UL7).